Reading from the N-terminus, the 181-residue chain is MKQFRGTTILSVRRNGKVVIGGDGQVSMGSTIMKANARKVRRLYNGKVIAGFAGGTADAFTLFERFESKLEKHSGNLTRAAVELAKDWRTDRILRRLEALLTVADSKASLIITGLGDVIEPEQSLMAIGSGGSFAQAAAKALLENTKLSARKIVEKALTIAADICIYTNLNFTIEELDSES.

Thr-7 is an active-site residue. Residues Ala-162, Cys-165, and Thr-168 each coordinate Na(+).

This sequence belongs to the peptidase T1B family. HslV subfamily. In terms of assembly, a double ring-shaped homohexamer of HslV is capped on each side by a ring-shaped HslU homohexamer. The assembly of the HslU/HslV complex is dependent on binding of ATP.

It localises to the cytoplasm. It carries out the reaction ATP-dependent cleavage of peptide bonds with broad specificity.. Allosterically activated by HslU binding. Its function is as follows. Protease subunit of a proteasome-like degradation complex believed to be a general protein degrading machinery. This chain is ATP-dependent protease subunit HslV, found in Coxiella burnetii (strain RSA 331 / Henzerling II).